Reading from the N-terminus, the 860-residue chain is Eukaryotic translation initiation factor 3 subunit C (860 aa).

The interval 1 to 76 (MSRFFYGNDS…SEESEEEDVV (76 aa)) is disordered. Acidic residues predominate over residues 10–51 (SDSDSSGSDEEELYSDEEVEQSEEESSEEDASSEEESSEDED). The region spanning 599–773 (FHMHINLELL…DAIVFRKGVE (175 aa)) is the PCI domain. The segment at 812 to 860 (RDQGAGARGGRGPRGGGQARGGPRLPGGQQRRPGGQQFGGGALGGAIKA) is disordered. Over residues 817–831 (GARGGRGPRGGGQAR) the composition is skewed to gly residues. The span at 832 to 846 (GGPRLPGGQQRRPGG) shows a compositional bias: low complexity. Residues 847 to 860 (QQFGGGALGGAIKA) show a composition bias toward gly residues.

The protein belongs to the eIF-3 subunit C family. As to quaternary structure, component of the eukaryotic translation initiation factor 3 (eIF-3) complex.

The protein localises to the cytoplasm. Its function is as follows. Component of the eukaryotic translation initiation factor 3 (eIF-3) complex, which is involved in protein synthesis of a specialized repertoire of mRNAs and, together with other initiation factors, stimulates binding of mRNA and methionyl-tRNAi to the 40S ribosome. The eIF-3 complex specifically targets and initiates translation of a subset of mRNAs involved in cell proliferation. In Emericella nidulans (strain FGSC A4 / ATCC 38163 / CBS 112.46 / NRRL 194 / M139) (Aspergillus nidulans), this protein is Eukaryotic translation initiation factor 3 subunit C (nip1).